A 349-amino-acid polypeptide reads, in one-letter code: GTPase Obg (349 aa).

Residues 1–159 enclose the Obg domain; the sequence is MKFLDEAKVY…RWIWLRLKLI (159 aa). The OBG-type G domain maps to 160–327; that stretch reads ADAGLVGLPN…ALRALVAVIG (168 aa). GTP contacts are provided by residues 166-173, 191-195, 212-215, 279-282, and 308-310; these read GLPNAGKS, FTTLH, DIPG, NKID, and SGV. Mg(2+) contacts are provided by serine 173 and threonine 193.

Belongs to the TRAFAC class OBG-HflX-like GTPase superfamily. OBG GTPase family. In terms of assembly, monomer. It depends on Mg(2+) as a cofactor.

It is found in the cytoplasm. Functionally, an essential GTPase which binds GTP, GDP and possibly (p)ppGpp with moderate affinity, with high nucleotide exchange rates and a fairly low GTP hydrolysis rate. Plays a role in control of the cell cycle, stress response, ribosome biogenesis and in those bacteria that undergo differentiation, in morphogenesis control. The polypeptide is GTPase Obg (Rhodopseudomonas palustris (strain BisA53)).